We begin with the raw amino-acid sequence, 363 residues long: Fructose-bisphosphate aldolase C (363 aa).

Substrate is bound by residues R56 and K147. Catalysis depends on K230, which acts as the Schiff-base intermediate with dihydroxyacetone-P.

Belongs to the class I fructose-bisphosphate aldolase family. As to quaternary structure, homotetramer. In terms of tissue distribution, expressed in brain but not in liver or muscle.

The enzyme catalyses beta-D-fructose 1,6-bisphosphate = D-glyceraldehyde 3-phosphate + dihydroxyacetone phosphate. It functions in the pathway carbohydrate degradation; glycolysis; D-glyceraldehyde 3-phosphate and glycerone phosphate from D-glucose: step 4/4. The protein is Fructose-bisphosphate aldolase C (aldoc) of Carassius auratus (Goldfish).